The following is a 66-amino-acid chain: Protein I177L (66 aa).

An N-linked (GlcNAc...) asparagine; by host glycan is attached at N11.

It belongs to the asfivirus I177L family.

The protein localises to the virion. The chain is Protein I177L from Ornithodoros (relapsing fever ticks).